The chain runs to 380 residues: Cytochrome b (380 aa).

The next 4 helical transmembrane spans lie at 34 to 54 (FGSL…LLAM), 78 to 99 (WLIR…YMHI), 114 to 134 (WNTG…GYVL), and 179 to 199 (FFAL…IHLT). His-84 and His-98 together coordinate heme b. Heme b-binding residues include His-183 and His-197. Residue His-202 coordinates a ubiquinone. The next 4 membrane-spanning stretches (helical) occupy residues 227-247 (LKDI…ALFS), 289-309 (LGGV…PFLH), 321-341 (LSQS…WIGS), and 348-368 (FIII…ILFP).

This sequence belongs to the cytochrome b family. In terms of assembly, the cytochrome bc1 complex contains 11 subunits: 3 respiratory subunits (MT-CYB, CYC1 and UQCRFS1), 2 core proteins (UQCRC1 and UQCRC2) and 6 low-molecular weight proteins (UQCRH/QCR6, UQCRB/QCR7, UQCRQ/QCR8, UQCR10/QCR9, UQCR11/QCR10 and a cleavage product of UQCRFS1). This cytochrome bc1 complex then forms a dimer. It depends on heme b as a cofactor.

Its subcellular location is the mitochondrion inner membrane. In terms of biological role, component of the ubiquinol-cytochrome c reductase complex (complex III or cytochrome b-c1 complex) that is part of the mitochondrial respiratory chain. The b-c1 complex mediates electron transfer from ubiquinol to cytochrome c. Contributes to the generation of a proton gradient across the mitochondrial membrane that is then used for ATP synthesis. The sequence is that of Cytochrome b (MT-CYB) from Oceanodroma tristrami (Tristram's storm-petrel).